Reading from the N-terminus, the 258-residue chain is UPF0246 protein YaaA (258 aa).

The protein belongs to the UPF0246 family.

The chain is UPF0246 protein YaaA from Shigella dysenteriae serotype 1 (strain Sd197).